A 336-amino-acid polypeptide reads, in one-letter code: DNA-directed RNA polymerase subunit alpha (336 aa).

Residues 1-234 form an alpha N-terminal domain (alpha-NTD) region; it reads MIEFVIPKKL…NHFKIVTEGL (234 aa). The segment at 269–336 is alpha C-terminal domain (alpha-CTD); that stretch reads VYNRKIDELE…KFGLELRKGE (68 aa).

Belongs to the RNA polymerase alpha chain family. Homodimer. The RNAP catalytic core consists of 2 alpha, 1 beta, 1 beta' and 1 omega subunit. When a sigma factor is associated with the core the holoenzyme is formed, which can initiate transcription.

It carries out the reaction RNA(n) + a ribonucleoside 5'-triphosphate = RNA(n+1) + diphosphate. Its function is as follows. DNA-dependent RNA polymerase catalyzes the transcription of DNA into RNA using the four ribonucleoside triphosphates as substrates. This is DNA-directed RNA polymerase subunit alpha from Thermotoga petrophila (strain ATCC BAA-488 / DSM 13995 / JCM 10881 / RKU-1).